A 323-amino-acid chain; its full sequence is V-type ATP synthase subunit C (323 aa).

Belongs to the V-ATPase V0D/AC39 subunit family.

Functionally, produces ATP from ADP in the presence of a proton gradient across the membrane. This Thermus thermophilus (strain ATCC 27634 / DSM 579 / HB8) protein is V-type ATP synthase subunit C (atpC).